The chain runs to 256 residues: Dihydroorotate dehydrogenase B (NAD(+)), electron transfer subunit (256 aa).

The FAD-binding FR-type domain occupies 2 to 100; that stretch reads IRLETMKVVA…MGPQGNGFDL (99 aa). FAD is bound by residues 51–54, 68–70, and 75–76; these read RPIS, IYR, and GT. Positions 220, 225, 228, and 243 each coordinate [2Fe-2S] cluster.

It belongs to the PyrK family. Heterotetramer of 2 PyrK and 2 PyrD type B subunits. [2Fe-2S] cluster serves as cofactor. The cofactor is FAD.

It participates in pyrimidine metabolism; UMP biosynthesis via de novo pathway; orotate from (S)-dihydroorotate (NAD(+) route): step 1/1. Its function is as follows. Responsible for channeling the electrons from the oxidation of dihydroorotate from the FMN redox center in the PyrD type B subunit to the ultimate electron acceptor NAD(+). In Streptococcus pneumoniae (strain ATCC BAA-255 / R6), this protein is Dihydroorotate dehydrogenase B (NAD(+)), electron transfer subunit.